The chain runs to 232 residues: Uracil-DNA glycosylase (232 aa).

Aspartate 66 (proton acceptor) is an active-site residue.

It belongs to the uracil-DNA glycosylase (UDG) superfamily. UNG family.

It localises to the cytoplasm. The catalysed reaction is Hydrolyzes single-stranded DNA or mismatched double-stranded DNA and polynucleotides, releasing free uracil.. Functionally, excises uracil residues from the DNA which can arise as a result of misincorporation of dUMP residues by DNA polymerase or due to deamination of cytosine. This is Uracil-DNA glycosylase from Lactobacillus acidophilus (strain ATCC 700396 / NCK56 / N2 / NCFM).